The sequence spans 436 residues: 3-ketoacyl-CoA thiolase (436 aa).

The Acyl-thioester intermediate role is filled by Cys-99. Active-site proton acceptor residues include His-392 and Cys-422.

The protein belongs to the thiolase-like superfamily. Thiolase family. Heterotetramer of two alpha chains (FadJ) and two beta chains (FadI).

It localises to the cytoplasm. It carries out the reaction an acyl-CoA + acetyl-CoA = a 3-oxoacyl-CoA + CoA. It participates in lipid metabolism; fatty acid beta-oxidation. In terms of biological role, catalyzes the final step of fatty acid oxidation in which acetyl-CoA is released and the CoA ester of a fatty acid two carbons shorter is formed. The chain is 3-ketoacyl-CoA thiolase from Escherichia coli O81 (strain ED1a).